The sequence spans 306 residues: Methionyl-tRNA formyltransferase (306 aa).

110-113 (SLLP) serves as a coordination point for (6S)-5,6,7,8-tetrahydrofolate.

Belongs to the Fmt family.

It catalyses the reaction L-methionyl-tRNA(fMet) + (6R)-10-formyltetrahydrofolate = N-formyl-L-methionyl-tRNA(fMet) + (6S)-5,6,7,8-tetrahydrofolate + H(+). Its function is as follows. Attaches a formyl group to the free amino group of methionyl-tRNA(fMet). The formyl group appears to play a dual role in the initiator identity of N-formylmethionyl-tRNA by promoting its recognition by IF2 and preventing the misappropriation of this tRNA by the elongation apparatus. This Brucella suis (strain ATCC 23445 / NCTC 10510) protein is Methionyl-tRNA formyltransferase.